The sequence spans 1059 residues: Zinc finger protein 628 (1059 aa).

C2H2-type zinc fingers lie at residues tyrosine 36 to histidine 58, tyrosine 64 to histidine 86, tyrosine 92 to histidine 114, phenylalanine 120 to histidine 142, tyrosine 148 to histidine 170, and tyrosine 176 to histidine 198. Phosphothreonine is present on threonine 199. The segment at phenylalanine 204 to histidine 226 adopts a C2H2-type 7 zinc-finger fold. Disordered regions lie at residues histidine 226 to glycine 247, leucine 260 to proline 280, and glutamate 312 to alanine 351. Residues alanine 228–alanine 237 are compositionally biased toward low complexity. Residues histidine 263–valine 279 are compositionally biased toward pro residues. Positions proline 323–alanine 335 are enriched in low complexity. Residues aspartate 336–alanine 351 show a composition bias toward pro residues. 7 consecutive C2H2-type zinc fingers follow at residues phenylalanine 356–histidine 378, phenylalanine 386–histidine 408, tyrosine 454–histidine 476, tyrosine 482–histidine 504, phenylalanine 510–histidine 532, tyrosine 538–histidine 560, and histidine 566–histidine 588. Phosphothreonine is present on threonine 589. 2 consecutive C2H2-type zinc fingers follow at residues phenylalanine 594–histidine 616 and phenylalanine 622–histidine 644. A compositionally biased stretch (low complexity) spans histidine 644–alanine 658. The disordered stretch occupies residues histidine 644–alanine 674. A run of 4 repeats spans residues valine 818–threonine 831, valine 832–threonine 842, valine 843–threonine 853, and valine 854–threonine 864. Residues valine 818–threonine 864 are 4 X approximate tandem repeats. The interval aspartate 943 to phenylalanine 1059 is interaction with TAF4B.

In terms of assembly, interacts with TAF4B.

It localises to the nucleus. In terms of biological role, transcriptional activator. Binds DNA on GT-box consensus sequence 5'-TTGGTT-3'. Plays a role in spermiogenesis. The chain is Zinc finger protein 628 (ZNF628) from Homo sapiens (Human).